The primary structure comprises 388 residues: Transposase for insertion sequence element IS406 (388 aa).

The protein belongs to the transposase mutator family.

In terms of biological role, required for the transposition of the insertion element. The chain is Transposase for insertion sequence element IS406 from Burkholderia multivorans (strain ATCC 17616 / 249).